Reading from the N-terminus, the 147-residue chain is Hemoglobin subunit beta (147 aa).

At Val2 the chain carries N-acetylvaline. Positions 3 to 147 (HLTPEEKNAV…VANALAHKYH (145 aa)) constitute a Globin domain. Residue Thr13 is modified to Phosphothreonine. At Ser45 the chain carries Phosphoserine. An N6-acetyllysine modification is found at Lys60. His64 lines the heme b pocket. The residue at position 83 (Lys83) is an N6-acetyllysine. His93 provides a ligand contact to heme b. S-nitrosocysteine is present on Cys94. At Lys145 the chain carries N6-acetyllysine.

This sequence belongs to the globin family. In terms of assembly, heterotetramer of two alpha chains and two beta chains. As to expression, red blood cells.

Functionally, involved in oxygen transport from the lung to the various peripheral tissues. The chain is Hemoglobin subunit beta (HBB) from Papio anubis (Olive baboon).